Here is a 383-residue protein sequence, read N- to C-terminus: Dimethylsulfoniopropionate lyase 3 (383 aa).

Belongs to the aspartate/glutamate racemases family. ALMA1 subfamily. In terms of assembly, homotetramer.

It carries out the reaction S,S-dimethyl-beta-propiothetin = acrylate + dimethyl sulfide + H(+). In terms of biological role, mediates cleavage of dimethylsulfoniopropionate (DMSP) into dimethyl sulfide (DMS) and acrylate. DMS is the principal form by which sulfur is transported from oceans to the atmosphere and is a key component of the ocean sulfur cycle. The polypeptide is Dimethylsulfoniopropionate lyase 3 (Emiliania huxleyi (strain CCMP1516)).